Consider the following 57-residue polypeptide: UPF0509 protein YciZ (57 aa).

Belongs to the UPF0509 family.

The polypeptide is UPF0509 protein YciZ (Escherichia coli O127:H6 (strain E2348/69 / EPEC)).